A 100-amino-acid chain; its full sequence is DNA-directed RNA polymerase subunit Rpo11 (100 aa).

It belongs to the archaeal Rpo11/eukaryotic RPB11/RPC19 RNA polymerase subunit family. As to quaternary structure, part of the RNA polymerase complex.

Its subcellular location is the cytoplasm. The enzyme catalyses RNA(n) + a ribonucleoside 5'-triphosphate = RNA(n+1) + diphosphate. In terms of biological role, DNA-dependent RNA polymerase (RNAP) catalyzes the transcription of DNA into RNA using the four ribonucleoside triphosphates as substrates. The protein is DNA-directed RNA polymerase subunit Rpo11 of Picrophilus torridus (strain ATCC 700027 / DSM 9790 / JCM 10055 / NBRC 100828 / KAW 2/3).